Here is a 628-residue protein sequence, read N- to C-terminus: Isoleucine--tRNA ligase (628 aa).

Residues 505-509 (KMSKR) carry the 'KMSKS' region motif. Lysine 508 contacts ATP.

The protein belongs to the class-I aminoacyl-tRNA synthetase family.

It catalyses the reaction tRNA(Ile) + L-isoleucine + ATP = L-isoleucyl-tRNA(Ile) + AMP + diphosphate. The sequence is that of Isoleucine--tRNA ligase from Antonospora locustae (Microsporidian parasite).